Consider the following 442-residue polypeptide: Chromosomal replication initiator protein DnaA (442 aa).

The segment at methionine 1 to glycine 75 is domain I, interacts with DnaA modulators. The interval glycine 75–glycine 104 is domain II. A domain III, AAA+ region region spans residues asparagine 105 to alanine 322. Positions 150, 152, 153, and 154 each coordinate ATP. The segment at asparagine 323–glutamate 442 is domain IV, binds dsDNA.

Belongs to the DnaA family. Oligomerizes as a right-handed, spiral filament on DNA at oriC.

The protein resides in the cytoplasm. Functionally, plays an essential role in the initiation and regulation of chromosomal replication. ATP-DnaA binds to the origin of replication (oriC) to initiate formation of the DNA replication initiation complex once per cell cycle. Binds the DnaA box (a 9 base pair repeat at the origin) and separates the double-stranded (ds)DNA. Forms a right-handed helical filament on oriC DNA; dsDNA binds to the exterior of the filament while single-stranded (ss)DNA is stabiized in the filament's interior. The ATP-DnaA-oriC complex binds and stabilizes one strand of the AT-rich DNA unwinding element (DUE), permitting loading of DNA polymerase. After initiation quickly degrades to an ADP-DnaA complex that is not apt for DNA replication. Binds acidic phospholipids. This chain is Chromosomal replication initiator protein DnaA, found in Xanthomonas euvesicatoria pv. vesicatoria (strain 85-10) (Xanthomonas campestris pv. vesicatoria).